The following is a 156-amino-acid chain: uncharacterized protein (156 aa).

The first 18 residues, 1 to 18, serve as a signal peptide directing secretion; it reads MKKLLSIFLMAFSLNAFA. Positions 19–156 constitute a Thioredoxin domain; the sequence is QTNLADVQLK…AEQIRVFAEK (138 aa). Cys-54 and Cys-57 are disulfide-bonded.

This sequence belongs to the thioredoxin family.

This is an uncharacterized protein from Haemophilus influenzae (strain ATCC 51907 / DSM 11121 / KW20 / Rd).